The primary structure comprises 842 residues: Follistatin-related protein 4 (842 aa).

Residues 1–22 (MKPGGFWLHLTLLGASLPAALG) form the signal peptide. The Kazal-like domain occupies 81 to 135 (KTGEPECQCLEACRPSYVPVCGSDGRFYENHCKLHRAACLLGKRITVIHSKDCFL). Cystine bridges form between C87–C119, C93–C112, and C101–C133. The EF-hand domain maps to 174 to 209 (QKRLLVESLFRDLDADGNGHLSSSELAQHVLKKQDL). Residues D187, D189, N191, H193, and E198 each coordinate Ca(2+). Ig-like domains lie at 251 to 338 (PEDR…LQVN) and 341 to 426 (PVIR…EDIS). 2 cysteine pairs are disulfide-bonded: C270/C321 and C362/C413. An N-linked (GlcNAc...) asparagine glycan is attached at N318.

It localises to the secreted. In Homo sapiens (Human), this protein is Follistatin-related protein 4 (FSTL4).